We begin with the raw amino-acid sequence, 339 residues long: Ketol-acid reductoisomerase (NADP(+)) (339 aa).

In terms of domain architecture, KARI N-terminal Rossmann spans 1–182; sequence MRVYYDRDAD…GGGRAGIIET (182 aa). NADP(+)-binding positions include 24–27, R48, S51, S53, and 83–86; these read YGSQ and DELQ. H108 is an active-site residue. Position 134 (G134) interacts with NADP(+). The 146-residue stretch at 183-328 folds into the KARI C-terminal knotted domain; the sequence is SFREETETDL…ARLRDMMPWI (146 aa). D191, E195, E227, and E231 together coordinate Mg(2+). S252 is a binding site for substrate.

This sequence belongs to the ketol-acid reductoisomerase family. Mg(2+) is required as a cofactor.

The enzyme catalyses (2R)-2,3-dihydroxy-3-methylbutanoate + NADP(+) = (2S)-2-acetolactate + NADPH + H(+). It catalyses the reaction (2R,3R)-2,3-dihydroxy-3-methylpentanoate + NADP(+) = (S)-2-ethyl-2-hydroxy-3-oxobutanoate + NADPH + H(+). Its pathway is amino-acid biosynthesis; L-isoleucine biosynthesis; L-isoleucine from 2-oxobutanoate: step 2/4. It functions in the pathway amino-acid biosynthesis; L-valine biosynthesis; L-valine from pyruvate: step 2/4. In terms of biological role, involved in the biosynthesis of branched-chain amino acids (BCAA). Catalyzes an alkyl-migration followed by a ketol-acid reduction of (S)-2-acetolactate (S2AL) to yield (R)-2,3-dihydroxy-isovalerate. In the isomerase reaction, S2AL is rearranged via a Mg-dependent methyl migration to produce 3-hydroxy-3-methyl-2-ketobutyrate (HMKB). In the reductase reaction, this 2-ketoacid undergoes a metal-dependent reduction by NADPH to yield (R)-2,3-dihydroxy-isovalerate. The chain is Ketol-acid reductoisomerase (NADP(+)) from Afipia carboxidovorans (strain ATCC 49405 / DSM 1227 / KCTC 32145 / OM5) (Oligotropha carboxidovorans).